A 520-amino-acid polypeptide reads, in one-letter code: Bifunctional purine biosynthesis protein PurH (520 aa).

The MGS-like domain maps to 1-146 (MAPVALLSVS…KNHADVAVLT (146 aa)).

The protein belongs to the PurH family.

It catalyses the reaction (6R)-10-formyltetrahydrofolate + 5-amino-1-(5-phospho-beta-D-ribosyl)imidazole-4-carboxamide = 5-formamido-1-(5-phospho-D-ribosyl)imidazole-4-carboxamide + (6S)-5,6,7,8-tetrahydrofolate. The catalysed reaction is IMP + H2O = 5-formamido-1-(5-phospho-D-ribosyl)imidazole-4-carboxamide. It participates in purine metabolism; IMP biosynthesis via de novo pathway; 5-formamido-1-(5-phospho-D-ribosyl)imidazole-4-carboxamide from 5-amino-1-(5-phospho-D-ribosyl)imidazole-4-carboxamide (10-formyl THF route): step 1/1. It functions in the pathway purine metabolism; IMP biosynthesis via de novo pathway; IMP from 5-formamido-1-(5-phospho-D-ribosyl)imidazole-4-carboxamide: step 1/1. The polypeptide is Bifunctional purine biosynthesis protein PurH (Synechococcus sp. (strain CC9605)).